We begin with the raw amino-acid sequence, 132 residues long: Small ribosomal subunit protein uS9 (132 aa).

It belongs to the universal ribosomal protein uS9 family.

The sequence is that of Small ribosomal subunit protein uS9 (rps9) from Thermoplasma volcanium (strain ATCC 51530 / DSM 4299 / JCM 9571 / NBRC 15438 / GSS1).